A 205-amino-acid chain; its full sequence is Probable GTP-binding protein EngB (205 aa).

Residues 21–196 (QVPEVAFAGR…VHEVSKCVKE (176 aa)) form the EngB-type G domain. GTP contacts are provided by residues 29–36 (GRSNVGKS), 56–60 (GSTRQ), 74–77 (DLPG), 141–144 (TKID), and 172–177 (IIGTSS). Mg(2+) is bound by residues Ser36 and Thr58.

This sequence belongs to the TRAFAC class TrmE-Era-EngA-EngB-Septin-like GTPase superfamily. EngB GTPase family. Mg(2+) is required as a cofactor.

In terms of biological role, necessary for normal cell division and for the maintenance of normal septation. This chain is Probable GTP-binding protein EngB, found in Anaplasma marginale (strain Florida).